Consider the following 617-residue polypeptide: Dihydroxy-acid dehydratase (617 aa).

A Mg(2+)-binding site is contributed by D81. C122 is a [2Fe-2S] cluster binding site. Residues D123 and K124 each contribute to the Mg(2+) site. K124 carries the post-translational modification N6-carboxylysine. C195 is a [2Fe-2S] cluster binding site. E490 contacts Mg(2+). Residue S516 is the Proton acceptor of the active site.

It belongs to the IlvD/Edd family. Homodimer. [2Fe-2S] cluster serves as cofactor. It depends on Mg(2+) as a cofactor.

The catalysed reaction is (2R)-2,3-dihydroxy-3-methylbutanoate = 3-methyl-2-oxobutanoate + H2O. It carries out the reaction (2R,3R)-2,3-dihydroxy-3-methylpentanoate = (S)-3-methyl-2-oxopentanoate + H2O. It participates in amino-acid biosynthesis; L-isoleucine biosynthesis; L-isoleucine from 2-oxobutanoate: step 3/4. It functions in the pathway amino-acid biosynthesis; L-valine biosynthesis; L-valine from pyruvate: step 3/4. Functions in the biosynthesis of branched-chain amino acids. Catalyzes the dehydration of (2R,3R)-2,3-dihydroxy-3-methylpentanoate (2,3-dihydroxy-3-methylvalerate) into 2-oxo-3-methylpentanoate (2-oxo-3-methylvalerate) and of (2R)-2,3-dihydroxy-3-methylbutanoate (2,3-dihydroxyisovalerate) into 2-oxo-3-methylbutanoate (2-oxoisovalerate), the penultimate precursor to L-isoleucine and L-valine, respectively. The polypeptide is Dihydroxy-acid dehydratase (Acidiphilium cryptum (strain JF-5)).